Reading from the N-terminus, the 213-residue chain is Thymidylate kinase (213 aa).

Position 10-17 (10-17) interacts with ATP; the sequence is GLEGAGKT.

Belongs to the thymidylate kinase family.

The enzyme catalyses dTMP + ATP = dTDP + ADP. Phosphorylation of dTMP to form dTDP in both de novo and salvage pathways of dTTP synthesis. The protein is Thymidylate kinase of Escherichia fergusonii (strain ATCC 35469 / DSM 13698 / CCUG 18766 / IAM 14443 / JCM 21226 / LMG 7866 / NBRC 102419 / NCTC 12128 / CDC 0568-73).